Here is a 262-residue protein sequence, read N- to C-terminus: MALSLGWKAHRNHCGLLLQALRSSGLLLFPCGQCPWRGAGSFLDPEIKAFLEENTEVTSSGSLTPEIQLRLLTPRCKFWWERADLWPHSDPYWAIYWPGGQALSRYLLDNPDVVRGKSVLDLGSGCGATAIAAKMSGASRILANDIDPIAGMAITLNCELNRLNPFPILIQNILNLEQDKWDLVVLGDMFYDEDLADSLHQWLKKCFWTYRTRVLIGDPGRPQFSGHSIQHHLHKVVEYSLLESTRQENSGLTTSTVWGFQP.

The transit peptide at methionine 1–glycine 38 directs the protein to the mitochondrion.

It belongs to the methyltransferase superfamily. ETFBKMT family. As to quaternary structure, interacts with HSPD1; this protein may possibly be a methylation substrate.

It localises to the cytoplasm. The protein resides in the mitochondrion matrix. The enzyme catalyses L-lysyl-[protein] + 3 S-adenosyl-L-methionine = N(6),N(6),N(6)-trimethyl-L-lysyl-[protein] + 3 S-adenosyl-L-homocysteine + 3 H(+). In terms of biological role, protein-lysine methyltransferase that selectively trimethylates the flavoprotein ETFB in mitochondria. Thereby, may negatively regulate the function of ETFB in electron transfer from Acyl-CoA dehydrogenases to the main respiratory chain. The chain is Electron transfer flavoprotein beta subunit lysine methyltransferase from Homo sapiens (Human).